The chain runs to 196 residues: Mitochondrial inner membrane protein SHH3 (196 aa).

The transit peptide at 1 to 53 (MKATIQRVTSVFGVPRASVFVPRISTPFILHNYISNGRMDLFSKEFHNGRVSK) directs the protein to the mitochondrion. Over 54-97 (SDLWSSNKEEELLVSQRKKRPISPHLTVYEPEMSWYLSSLHRIS) the chain is Mitochondrial matrix. Residues serine 91 and arginine 95 each coordinate a ubiquinone. The chain crosses the membrane as a helical span at residues 98-118 (GVLLALGFYAFTITLGVTTIM). The Mitochondrial intermembrane segment spans residues 119–137 (GMDTTFQDLNKWYHEKMPK). A helical membrane pass occupies residues 138–160 (WSQWVAKGSAAYLFAFHFGNGIR). Residue histidine 154 participates in heme binding. The Mitochondrial matrix segment spans residues 161–174 (HLIWDMGYELTNRG). A helical membrane pass occupies residues 175-195 (VIKTGSIVLAGTLVLGTYLLA). Position 196 (glutamine 196) is a topological domain, mitochondrial intermembrane.

The protein belongs to the cytochrome b560 family.

Its subcellular location is the mitochondrion inner membrane. Its function is as follows. Homolog of SDH3, but seems not to be a stoichiometric subunit of either the succinate dehydrogenase (SDH) complex or the mitochondrial inner membrane translocase TIM22 complex. The sequence is that of Mitochondrial inner membrane protein SHH3 from Saccharomyces cerevisiae (strain ATCC 204508 / S288c) (Baker's yeast).